A 294-amino-acid polypeptide reads, in one-letter code: ATP synthase gamma chain (294 aa).

It belongs to the ATPase gamma chain family. In terms of assembly, F-type ATPases have 2 components, CF(1) - the catalytic core - and CF(0) - the membrane proton channel. CF(1) has five subunits: alpha(3), beta(3), gamma(1), delta(1), epsilon(1). CF(0) has three main subunits: a, b and c.

The protein resides in the cell inner membrane. Functionally, produces ATP from ADP in the presence of a proton gradient across the membrane. The gamma chain is believed to be important in regulating ATPase activity and the flow of protons through the CF(0) complex. The polypeptide is ATP synthase gamma chain (Paraburkholderia phytofirmans (strain DSM 17436 / LMG 22146 / PsJN) (Burkholderia phytofirmans)).